The primary structure comprises 277 residues: Caspase-3 (277 aa).

At Met-1 the chain carries N-acetylmethionine. Propeptides lie at residues 1 to 9 (MENNETSVD) and 10 to 28 (AKSIKNLETQTIHGSKSMD). An N6-acetyllysine modification is found at Lys-11. At Ser-26 the chain carries Phosphoserine. Active-site residues include His-121 and Cys-163. Cys-163 carries the S-nitrosocysteine; in inhibited form modification.

This sequence belongs to the peptidase C14A family. In terms of assembly, heterotetramer that consists of two anti-parallel arranged heterodimers, each one formed by a 17 kDa (p17) and a 12 kDa (p12) subunit. Interacts with BIRC6/bruce. Cleavage by granzyme B, caspase-6, caspase-8 and caspase-10 generates the two active subunits. Additional processing of the propeptides is likely due to the autocatalytic activity of the activated protease. Active heterodimers between the small subunit of caspase-7 protease and the large subunit of caspase-3 also occur and vice versa. Post-translationally, S-nitrosylated on its catalytic site cysteine in unstimulated cell lines and denitrosylated upon activation of the Fas apoptotic pathway, associated with an increase in intracellular caspase activity. Fas therefore activates caspase-3 not only by inducing the cleavage of the caspase zymogen to its active subunits, but also by stimulating the denitrosylation of its active site thiol. In terms of processing, ubiquitinated by BIRC6; this activity is inhibited by DIABLO/SMAC.

The protein localises to the cytoplasm. It catalyses the reaction Strict requirement for an Asp residue at positions P1 and P4. It has a preferred cleavage sequence of Asp-Xaa-Xaa-Asp-|- with a hydrophobic amino-acid residue at P2 and a hydrophilic amino-acid residue at P3, although Val or Ala are also accepted at this position.. Inhibited by BIRC6; following inhibition of BIRC6-caspase binding by DIABLO/SMAC, BIRC6 is subjected to caspase cleavage, leading to an increase in active caspases. In terms of biological role, involved in the activation cascade of caspases responsible for apoptosis execution. At the onset of apoptosis, it proteolytically cleaves poly(ADP-ribose) polymerase PARP1 at a '216-Asp-|-Gly-217' bond. Cleaves and activates sterol regulatory element binding proteins (SREBPs) between the basic helix-loop-helix leucine zipper domain and the membrane attachment domain. Cleaves and activates caspase-6, -7 and -9 (CASP6, CASP7 and CASP9, respectively). Cleaves and inactivates interleukin-18 (IL18). Triggers cell adhesion in sympathetic neurons through RET cleavage. Cleaves IL-1 beta between an Asp and an Ala, releasing the mature cytokine which is involved in a variety of inflammatory processes. Cleaves and inhibits serine/threonine-protein kinase AKT1 in response to oxidative stress. Acts as an inhibitor of type I interferon production during virus-induced apoptosis by mediating cleavage of antiviral proteins CGAS, IRF3 and MAVS, thereby preventing cytokine overproduction. Also involved in pyroptosis by mediating cleavage and activation of gasdermin-E (GSDME). Cleaves XRCC4 and phospholipid scramblase proteins XKR4, XKR8 and XKR9, leading to promote phosphatidylserine exposure on apoptotic cell surface. Cleaves BIRC6 following inhibition of BIRC6-caspase binding by DIABLO/SMAC. The protein is Caspase-3 (CASP3) of Oryctolagus cuniculus (Rabbit).